We begin with the raw amino-acid sequence, 168 residues long: Acetolactate synthase small subunit (168 aa).

An ACT domain is found at 7–82 (TLSVLVEDKP…VIKIVEQDDE (76 aa)).

The protein belongs to the acetolactate synthase small subunit family. As to quaternary structure, dimer of large and small chains.

The enzyme catalyses 2 pyruvate + H(+) = (2S)-2-acetolactate + CO2. It functions in the pathway amino-acid biosynthesis; L-isoleucine biosynthesis; L-isoleucine from 2-oxobutanoate: step 1/4. It participates in amino-acid biosynthesis; L-valine biosynthesis; L-valine from pyruvate: step 1/4. In Mycobacterium bovis (strain ATCC BAA-935 / AF2122/97), this protein is Acetolactate synthase small subunit (ilvH).